A 317-amino-acid chain; its full sequence is Glucokinase (317 aa).

ATP is bound at residue 6–12; the sequence is GVDIGGT.

Belongs to the ROK (NagC/XylR) family. In terms of assembly, homooligomer (possibly a homotetramer). Alternatively, it may form a heterotetramer of two glucokinase subunits with two ORF2 (AC P40182) proteins.

It localises to the cytoplasm. It catalyses the reaction D-glucose + ATP = D-glucose 6-phosphate + ADP + H(+). Its function is as follows. A probable glucose kinase. Required for glucose repression of many different genes, restores glucose kinase activity in E.coli glk mutants. The polypeptide is Glucokinase (glkA) (Streptomyces coelicolor (strain ATCC BAA-471 / A3(2) / M145)).